A 648-amino-acid polypeptide reads, in one-letter code: Bifunctional lysine-specific demethylase and histidyl-hydroxylase NO66 (648 aa).

The tract at residues 1 to 168 is disordered; that stretch reads MSKVSSIFDT…KGAKAAKKNK (168 aa). Over residues 17–28 the composition is skewed to low complexity; that stretch reads PATTENGAAAKP. Positions 109-119 are enriched in basic residues; the sequence is DHRKHKEKLRK. Polar residues predominate over residues 123–137; that stretch reads GVENSRQAAASTSML. A compositionally biased stretch (basic residues) spans 155–168; the sequence is PVHHKGAKAAKKNK. Positions 308–453 constitute a JmjC domain; sequence CSIRMLNPQT…DLLELYLPHA (146 aa). Fe cation-binding residues include His-354, Asp-356, and His-419.

Belongs to the ROX family. NO66 subfamily. It depends on Fe(2+) as a cofactor.

It localises to the nucleus. The enzyme catalyses N(6),N(6)-dimethyl-L-lysyl(36)-[histone H3] + 2 2-oxoglutarate + 2 O2 = L-lysyl(36)-[histone H3] + 2 formaldehyde + 2 succinate + 2 CO2. Functionally, oxygenase that can act as both a histone lysine demethylase and a ribosomal histidine hydroxylase. Specifically demethylates 'Lys-4' (H3K4me) and 'Lys-36' (H3K36me) of histone H3, thereby playing a central role in histone code. This Culex quinquefasciatus (Southern house mosquito) protein is Bifunctional lysine-specific demethylase and histidyl-hydroxylase NO66.